A 179-amino-acid polypeptide reads, in one-letter code: uncharacterized protein (179 aa).

4 consecutive transmembrane segments (helical) span residues 9–31 (WILV…VSTL), 41–63 (AFLL…YGSF), 114–136 (AYYG…LLGA), and 146–168 (AFWG…NYLM).

It is found in the cell membrane. This is an uncharacterized protein from Aquifex aeolicus (strain VF5).